A 114-amino-acid chain; its full sequence is Protein S40-2 (114 aa).

The tract at residues 23 to 50 (RYTKLYNSRNDEKKGTRRHETAEKTSPV) is disordered. The span at 31–45 (RNDEKKGTRRHETAE) shows a compositional bias: basic and acidic residues.

It belongs to the senescence regulator S40 family.

It is found in the cytoplasm. The sequence is that of Protein S40-2 from Arabidopsis thaliana (Mouse-ear cress).